A 393-amino-acid polypeptide reads, in one-letter code: MMILSKARCVELLEMPIETINGDWRFKASPHVTTRGVTEGVALLHMNSVRVVPGKGVVSRVDRANDFLSFLYHDISRISAGTCEPRESMLAVILPIDKVEEYVAKFRRVEPFTMGGFREACRALKFSAAVGTIFDRIMKDIFNRSPTLAMDGIPPLAKGLCFVLKSRGITPIRGGLLVGEIPKACGDHCPKCGAQYATRKSRFVTEIDLVGFDSTDNTCVLIEVKTYKNSVLPIAVLKKYNTQTWINWFLFGLMYPHLRQYTKSLIAVVSPAGRVVQLFNVRSPPITRRMISAFPFLGEYCPQMRRMMTAAAMTYVIKAPFVAAHVTGTDNVSIEVFSQSNKLPPNKWATDDAARREMERTRKARYRAKNRAVADPEDSPPGKRLRRGPKSST.

The interval 345–393 (PNKWATDDAARREMERTRKARYRAKNRAVADPEDSPPGKRLRRGPKSST) is disordered. Residues 349–361 (ATDDAARREMERT) show a composition bias toward basic and acidic residues. The segment covering 383–393 (KRLRRGPKSST) has biased composition (basic residues).

This is an uncharacterized protein from Ictalurid herpesvirus 1 (strain Auburn) (IcHV-1).